We begin with the raw amino-acid sequence, 316 residues long: Aspartate carbamoyltransferase catalytic subunit (316 aa).

R56 and T57 together coordinate carbamoyl phosphate. K84 contacts L-aspartate. Carbamoyl phosphate contacts are provided by R106, H139, and Q142. L-aspartate-binding residues include R172 and R226. Carbamoyl phosphate-binding residues include G267 and P268.

Belongs to the aspartate/ornithine carbamoyltransferase superfamily. ATCase family. Heterododecamer (2C3:3R2) of six catalytic PyrB chains organized as two trimers (C3), and six regulatory PyrI chains organized as three dimers (R2).

It carries out the reaction carbamoyl phosphate + L-aspartate = N-carbamoyl-L-aspartate + phosphate + H(+). The protein operates within pyrimidine metabolism; UMP biosynthesis via de novo pathway; (S)-dihydroorotate from bicarbonate: step 2/3. Functionally, catalyzes the condensation of carbamoyl phosphate and aspartate to form carbamoyl aspartate and inorganic phosphate, the committed step in the de novo pyrimidine nucleotide biosynthesis pathway. This chain is Aspartate carbamoyltransferase catalytic subunit, found in Mycobacterium sp. (strain JLS).